A 208-amino-acid chain; its full sequence is Negative modulator of initiation of replication (208 aa).

The tract at residues 115-116 (AV) is interaction with DNA.

This sequence belongs to the SeqA family. As to quaternary structure, homodimer. Polymerizes to form helical filaments.

The protein localises to the cytoplasm. Functionally, negative regulator of replication initiation, which contributes to regulation of DNA replication and ensures that replication initiation occurs exactly once per chromosome per cell cycle. Binds to pairs of hemimethylated GATC sequences in the oriC region, thus preventing assembly of replication proteins and re-initiation at newly replicated origins. Repression is relieved when the region becomes fully methylated. This chain is Negative modulator of initiation of replication, found in Shewanella frigidimarina (strain NCIMB 400).